Reading from the N-terminus, the 265-residue chain is U6 snRNA phosphodiesterase 1 (265 aa).

Residues 1 to 72 (MSAAPLVGYS…DSTKHGGRVR (72 aa)) are disordered. Residues 20–31 (DGMRTRPGDGSH) show a composition bias toward basic and acidic residues. His120 (proton acceptor) is an active-site residue. 120 to 122 (HLS) is an AMP binding site. Residues Gln164, Tyr202, and 206-210 (SFHLS) each bind UMP. AMP is bound by residues Tyr202 and 204–210 (DPSFHLS). Residue His208 is the Proton donor of the active site.

This sequence belongs to the 2H phosphoesterase superfamily. USB1 family. As to quaternary structure, interacts with PLRG1, CDC5L and PRPF19.

It localises to the nucleus. The catalysed reaction is a 3'-end uridylyl-uridine-RNA = a 3'-end 2',3'-cyclophospho-uridine-RNA + uridine. It catalyses the reaction a 3'-end uridylyl-adenosine-RNA = a 3'-end 2',3'-cyclophospho-uridine-RNA + adenosine. 3'-5' RNA exonuclease activity is inhibited by a 3' phosphate terminated RNA. Functionally, 3'-5' RNA exonuclease that trims the 3' end of oligo(U) and oligo(A) tracts of the pre-U6 small nuclear RNA (snRNA) molecule, leading to the formation of a mature U6 snRNA 3' end-terminated with a 2',3'-cyclic phosphate. Participates in the U6 snRNA 3' end processing that prevents U6 snRNA degradation. In addition also removes uridines from the 3' end of U6atac snRNA and possibly the vault RNA VTRNA1-1. This is U6 snRNA phosphodiesterase 1 from Homo sapiens (Human).